A 365-amino-acid chain; its full sequence is UDP-N-acetylglucosamine--N-acetylmuramyl-(pentapeptide) pyrophosphoryl-undecaprenol N-acetylglucosamine transferase (365 aa).

Residues 19-21 (TGG), N131, R170, S201, I255, 274-279 (ALTVTE), and Q300 each bind UDP-N-acetyl-alpha-D-glucosamine.

Belongs to the glycosyltransferase 28 family. MurG subfamily.

The protein localises to the cell inner membrane. The catalysed reaction is di-trans,octa-cis-undecaprenyl diphospho-N-acetyl-alpha-D-muramoyl-L-alanyl-D-glutamyl-meso-2,6-diaminopimeloyl-D-alanyl-D-alanine + UDP-N-acetyl-alpha-D-glucosamine = di-trans,octa-cis-undecaprenyl diphospho-[N-acetyl-alpha-D-glucosaminyl-(1-&gt;4)]-N-acetyl-alpha-D-muramoyl-L-alanyl-D-glutamyl-meso-2,6-diaminopimeloyl-D-alanyl-D-alanine + UDP + H(+). It functions in the pathway cell wall biogenesis; peptidoglycan biosynthesis. Its function is as follows. Cell wall formation. Catalyzes the transfer of a GlcNAc subunit on undecaprenyl-pyrophosphoryl-MurNAc-pentapeptide (lipid intermediate I) to form undecaprenyl-pyrophosphoryl-MurNAc-(pentapeptide)GlcNAc (lipid intermediate II). In Acinetobacter baumannii (strain ACICU), this protein is UDP-N-acetylglucosamine--N-acetylmuramyl-(pentapeptide) pyrophosphoryl-undecaprenol N-acetylglucosamine transferase.